The chain runs to 350 residues: DNA-directed RNA polymerase subunit alpha (350 aa).

The alpha N-terminal domain (alpha-NTD) stretch occupies residues 1–226; sequence MLISQRPTLS…ELFGLARELN (226 aa). Residues 241 to 350 form an alpha C-terminal domain (alpha-CTD) region; sequence ADHIASFALP…NQDYAETEQL (110 aa). The disordered stretch occupies residues 328 to 350; sequence GTWTSDAGYDLDDNQDYAETEQL. Positions 336-350 are enriched in acidic residues; that stretch reads YDLDDNQDYAETEQL.

Belongs to the RNA polymerase alpha chain family. As to quaternary structure, homodimer. The RNAP catalytic core consists of 2 alpha, 1 beta, 1 beta' and 1 omega subunit. When a sigma factor is associated with the core the holoenzyme is formed, which can initiate transcription.

It carries out the reaction RNA(n) + a ribonucleoside 5'-triphosphate = RNA(n+1) + diphosphate. Its function is as follows. DNA-dependent RNA polymerase catalyzes the transcription of DNA into RNA using the four ribonucleoside triphosphates as substrates. This is DNA-directed RNA polymerase subunit alpha from Mycolicibacterium smegmatis (strain ATCC 700084 / mc(2)155) (Mycobacterium smegmatis).